Reading from the N-terminus, the 236-residue chain is 1-(5-phosphoribosyl)-5-[(5-phosphoribosylamino)methylideneamino] imidazole-4-carboxamide isomerase (236 aa).

The active-site Proton acceptor is the Asp-8. The active-site Proton donor is the Asp-127.

Belongs to the HisA/HisF family.

It localises to the cytoplasm. The catalysed reaction is 1-(5-phospho-beta-D-ribosyl)-5-[(5-phospho-beta-D-ribosylamino)methylideneamino]imidazole-4-carboxamide = 5-[(5-phospho-1-deoxy-D-ribulos-1-ylimino)methylamino]-1-(5-phospho-beta-D-ribosyl)imidazole-4-carboxamide. The protein operates within amino-acid biosynthesis; L-histidine biosynthesis; L-histidine from 5-phospho-alpha-D-ribose 1-diphosphate: step 4/9. The protein is 1-(5-phosphoribosyl)-5-[(5-phosphoribosylamino)methylideneamino] imidazole-4-carboxamide isomerase of Sulfurimonas denitrificans (strain ATCC 33889 / DSM 1251) (Thiomicrospira denitrificans (strain ATCC 33889 / DSM 1251)).